Consider the following 492-residue polypeptide: MKKGSLGIVETKYYHLEEELKLESGRKISDVTIAYEAYGTLNRDKNNVILVCHALTGDAHAAGWHKGDNKPGWWDILIGPGKCLDTDKYFIVCSNVIGGCRGSTGPSSIDPETGKPYGLSFPVITIKDMVNAQKKLLDHLGISSIYAVIGGSMGGLQVLQWSVSYPDYINKAIALAASAYSSPQQIAFNEVARIAIISDPEWNKGNYYYSRQPSHGLALARMIGHITYLSDESMREKFGRELQDRDRYNYDLSMDFQVESYLHYKGRSFTERFDANSYLYITKAVDYFDLTENGSLIDGLKDIKAKCLIIAVTSDWLYPPYQSKDIVMALNANNVDVTYREIESNYGHDAFLLEAGQLNYVIGGFLNNITVSDIMKLDVVTVQEDISIEDAAQIMFDNGITHLPVVSDDEQIRGIITSWDISKAVALKFTTLDRILTKNVITSRPDEGIEKCARKMQNNNISALPVIDENRKVIGIIGSDEINKMIGNHRCT.

In terms of domain architecture, AB hydrolase-1 spans 47–354 (NVILVCHALT…NYGHDAFLLE (308 aa)). The Nucleophile role is filled by Ser-152. Arg-221 contacts substrate. Active-site residues include Asp-315 and His-348. Asp-349 contacts substrate. CBS domains follow at residues 375–432 (MKLD…FTTL) and 436–492 (LTKN…HRCT).

It belongs to the AB hydrolase superfamily. MetX family. As to quaternary structure, homodimer.

Its subcellular location is the cytoplasm. It carries out the reaction L-homoserine + acetyl-CoA = O-acetyl-L-homoserine + CoA. Its pathway is amino-acid biosynthesis; L-methionine biosynthesis via de novo pathway; O-acetyl-L-homoserine from L-homoserine: step 1/1. Transfers an acetyl group from acetyl-CoA to L-homoserine, forming acetyl-L-homoserine. This chain is Homoserine O-acetyltransferase, found in Methanosalsum zhilinae (strain DSM 4017 / NBRC 107636 / OCM 62 / WeN5) (Methanohalophilus zhilinae).